We begin with the raw amino-acid sequence, 48 residues long: Osteocalcin (48 aa).

The region spanning 1 to 46 (SFAVGSSYGAAPDPLEAQREVCELNPDCDELADHIGFQEAYRRFYG) is the Gla domain. Residues Glu-16, Glu-20, Glu-23, and Asp-29 each coordinate Ca(2+). Glu-16, Glu-20, and Glu-23 each carry 4-carboxyglutamate. Cys-22 and Cys-28 are oxidised to a cystine.

The protein belongs to the osteocalcin/matrix Gla protein family. Post-translationally, gamma-carboxyglutamate residues are formed by vitamin K dependent carboxylation by GGCX. These residues are essential for the binding of calcium.

Its subcellular location is the secreted. The carboxylated form is one of the main organic components of the bone matrix, which constitutes 1-2% of the total bone protein. The carboxylated form binds strongly to apatite and calcium. The polypeptide is Osteocalcin (BGLAP) (Dromaius novaehollandiae (Emu)).